A 694-amino-acid polypeptide reads, in one-letter code: Long-chain-fatty-acid--CoA ligase 4 (694 aa).

The disordered stretch occupies residues 1-21 (MTEQYSVAVGEAANEHETAPR). 269–280 (YTSGSTGTPKGV) contributes to the ATP binding site. An FACS motif is present at residues 527–576 (DGWFRTGDIAEWTPKGQVKIIDRKKNLVKTLNGEYIALEKLESIYRSNPY).

Belongs to the ATP-dependent AMP-binding enzyme family. Interacts with FAT1. Requires Mg(2+) as cofactor.

It localises to the lipid droplet. It catalyses the reaction a long-chain fatty acid + ATP + CoA = a long-chain fatty acyl-CoA + AMP + diphosphate. It carries out the reaction (9Z)-hexadecenoate + ATP + CoA = (9Z)-hexadecenoyl-CoA + AMP + diphosphate. The enzyme catalyses (9Z)-octadecenoate + ATP + CoA = (9Z)-octadecenoyl-CoA + AMP + diphosphate. The catalysed reaction is hexadecanoate + ATP + CoA = hexadecanoyl-CoA + AMP + diphosphate. Its function is as follows. Activates long-chain fatty acids (LCFA) by esterification of the fatty acids into metabolically active CoA-thioesters for subsequent degradation or incorporation into phospholipids. Also facilitates the transport of LCFAs into the cell, either by active transport or by decreasing the intracellular LCFA concentration. Contributes, with FAA1, to the activation of imported myristate. Also involved in long-chain base (LCB) uptake. In contrast ot LCFA uptake, LCB uptake does not require ATP, suggesting that the enzyme is directly involved in LCB uptake. Involved in the sphingolipid-to-glycerolipid metabolic pathway, converting the sphingolipid metabolite hexadecenoic acid to hexadecenoyl-CoA, which is then further converted to glycerolipids. The protein is Long-chain-fatty-acid--CoA ligase 4 (FAA4) of Saccharomyces cerevisiae (strain ATCC 204508 / S288c) (Baker's yeast).